The following is a 113-amino-acid chain: Ribulose bisphosphate carboxylase small subunit (113 aa).

Belongs to the RuBisCO small chain family. Heterohexadecamer of 8 large and 8 small subunits. Forms a CsoS2-CsoS1-RuBisCO complex.

Its subcellular location is the carboxysome. Functionally, ruBisCO catalyzes two reactions: the carboxylation of D-ribulose 1,5-bisphosphate, the primary event in carbon dioxide fixation, as well as the oxidative fragmentation of the pentose substrate in the photorespiration process. Both reactions occur simultaneously and in competition at the same active site. Although the small subunit is not catalytic it is essential for maximal activity. There are estimated to be 152 RuBisCO holoenzymes per carboxysome. This chain is Ribulose bisphosphate carboxylase small subunit, found in Prochlorococcus marinus subsp. pastoris (strain CCMP1986 / NIES-2087 / MED4).